Here is a 153-residue protein sequence, read N- to C-terminus: Putative pre-16S rRNA nuclease (153 aa).

This sequence belongs to the YqgF nuclease family.

It is found in the cytoplasm. Functionally, could be a nuclease involved in processing of the 5'-end of pre-16S rRNA. The chain is Putative pre-16S rRNA nuclease from Koribacter versatilis (strain Ellin345).